Here is a 294-residue protein sequence, read N- to C-terminus: 33 kDa chaperonin (294 aa).

2 disulfide bridges follow: Cys-238/Cys-240 and Cys-271/Cys-274.

Belongs to the HSP33 family. In terms of processing, under oxidizing conditions two disulfide bonds are formed involving the reactive cysteines. Under reducing conditions zinc is bound to the reactive cysteines and the protein is inactive.

It localises to the cytoplasm. In terms of biological role, redox regulated molecular chaperone. Protects both thermally unfolding and oxidatively damaged proteins from irreversible aggregation. Plays an important role in the bacterial defense system toward oxidative stress. The sequence is that of 33 kDa chaperonin from Caldanaerobacter subterraneus subsp. tengcongensis (strain DSM 15242 / JCM 11007 / NBRC 100824 / MB4) (Thermoanaerobacter tengcongensis).